We begin with the raw amino-acid sequence, 145 residues long: MGRRASREIAMKLIYQLEIQKDSREEQINNTLEQYDLNENDREYILDVVKGVFKNQEEIDGTIEKFSKGWKLSRISKVDLAILRLAIYEMCHRDDIPFTVAINEAVELAKNYSGEESGSFINGILGKVVKVKLMSADGNENRDEE.

The protein belongs to the NusB family.

Its function is as follows. Involved in transcription antitermination. Required for transcription of ribosomal RNA (rRNA) genes. Binds specifically to the boxA antiterminator sequence of the ribosomal RNA (rrn) operons. This Acetivibrio thermocellus (strain ATCC 27405 / DSM 1237 / JCM 9322 / NBRC 103400 / NCIMB 10682 / NRRL B-4536 / VPI 7372) (Clostridium thermocellum) protein is Transcription antitermination protein NusB.